We begin with the raw amino-acid sequence, 407 residues long: MAIENSKTGVKKVVLAYSGGLDTSAIIPWLKENYDNCEIVAFCADVGQGEEELVGLTEKALASGASECHIVDLKEEFVKDYIYPTIATGAIYEGTYLLGTSMARPIIAKAQVEVARKVGADALCHGCTGKGNDQVRFEGCFAALAPDLKVIAPWREWDMESREDLLAYLAERNIKTSASATKIYSRDANAWHISHEGGELEDPWNEPSKQVWTMTVDPLDAPDEPEYVTLKIENARVTEVNGEALSPYQALMKLNAIAAPHGVGRIDITENRLVGMKSRGCYETPGGTVMFAALRAVEELVLDKSSREWREQVAARMAHLVYDGRWFTPLCDSLLAASESLATMVNGEVVVKLYKGQAVPVKKRSPNSLYSEAFATFGQDSVYDQKHAEGFIRLYSLASRIRAYNTK.

ATP contacts are provided by residues 16–24 and Ala44; that span reads AYSGGLDTS. 2 residues coordinate L-citrulline: Tyr96 and Ser101. Gly126 serves as a coordination point for ATP. Residues Thr128, Asn132, and Asp133 each coordinate L-aspartate. Residue Asn132 participates in L-citrulline binding. L-citrulline is bound by residues Arg136, Ser185, Ser194, Glu270, and Tyr282.

The protein belongs to the argininosuccinate synthase family. Type 1 subfamily. In terms of assembly, homotetramer.

It is found in the cytoplasm. It catalyses the reaction L-citrulline + L-aspartate + ATP = 2-(N(omega)-L-arginino)succinate + AMP + diphosphate + H(+). The protein operates within amino-acid biosynthesis; L-arginine biosynthesis; L-arginine from L-ornithine and carbamoyl phosphate: step 2/3. This Shewanella amazonensis (strain ATCC BAA-1098 / SB2B) protein is Argininosuccinate synthase.